The sequence spans 142 residues: Maximins y/H11 (142 aa).

Residues Met-1–Ala-18 form the signal peptide. A propeptide spanning residues Glu-19–Arg-43 is cleaved from the precursor. At Phe-68 the chain carries Phenylalanine amide. Positions Ser-72–Arg-121 are excised as a propeptide. Residue Ile-141 is modified to Isoleucine amide.

Belongs to the bombinin family. As to expression, expressed by the skin glands.

It is found in the secreted. Functionally, maximin-y shows antimicrobial activity against bacteria and against the fungus C.albicans. It has little hemolytic activity. In terms of biological role, maximin-H11 shows antimicrobial activity against bacteria and against the fungus C.albicans. Shows strong hemolytic activity. This chain is Maximins y/H11, found in Bombina maxima (Giant fire-bellied toad).